The chain runs to 996 residues: Oxysterol-binding protein homolog 3 (996 aa).

The GOLD domain stretch occupies residues 1–183 (METIDIQNRS…KKKILFNASV (183 aa)). The disordered stretch occupies residues 75–114 (GSSSNIEEHHRRSSQHSHSSSNGSDNKRKERSYSSLSISG). Phosphoserine occurs at positions 190 and 193. The residue at position 210 (T210) is a Phosphothreonine. In terms of domain architecture, PH spans 221 to 315 (GRYLQGYLLK…WVDALQTCFD (95 aa)). Position 323 is a phosphothreonine (T323). Position 324 is a phosphoserine (S324). Residues T325 and T352 each carry the phosphothreonine modification. Positions 338 to 372 (EVINKSSPQDHDHLTPTATTKSALSHRQHTQKDMD) are disordered. Positions 514–520 (EFFDAEE) match the FFAT motif. The tract at residues 556–611 (KEVQLSGSEQIASSSVESYTTNDENHSRKHLKNRHKNRRRGHPHHQKTKSAQSSTE) is disordered. The span at 558–577 (VQLSGSEQIASSSVESYTTN) shows a compositional bias: polar residues. The segment covering 582–603 (SRKHLKNRHKNRRRGHPHHQKT) has biased composition (basic residues). At S605 the chain carries Phosphoserine. The tract at residues 642 to 982 (SLLSFLRKNV…YITGPKSYWE (341 aa)) is OSBP-related domain (ORD). Residues 657–660 (SIAM), K717, 745–746 (HR), and 945–949 (EQLQR) each bind a 1,2-diacyl-sn-glycero-3-phospho-(1D-myo-inositol 4-phosphate).

It belongs to the OSBP family. Interacts with SCS2.

The protein resides in the cytoplasm. Its subcellular location is the endoplasmic reticulum membrane. In terms of biological role, lipid transport protein (LTP) involved in non-vesicular transfer of lipids between membranes. Functions in phosphoinositide-coupled directional transport of various lipids by carrying the lipid molecule in a hydrophobic pocket and transferring it between membranes through the cytosol. Involved in maintenance of intracellular sterol distribution and homeostasis. May serve as a sensor of PI4P levels at PM-ER membrane contact site, regulating PI4P phosphatase SAC1 activity. May be involved in ergosterol transport from the plasma membrane (PM) to the ER, however it does not bind sterols directly. Plays a role in the positive regulation of vesicular transport of ceramide from the ER to the Golgi, negatively regulating COPII-mediated ER export of cargos. The protein is Oxysterol-binding protein homolog 3 of Saccharomyces cerevisiae (strain ATCC 204508 / S288c) (Baker's yeast).